Consider the following 529-residue polypeptide: Bifunctional purine biosynthesis protein PurH (529 aa).

An MGS-like domain is found at 2-149; the sequence is TNLVPVGRAL…KNHRFVNVVT (148 aa).

This sequence belongs to the PurH family.

It catalyses the reaction (6R)-10-formyltetrahydrofolate + 5-amino-1-(5-phospho-beta-D-ribosyl)imidazole-4-carboxamide = 5-formamido-1-(5-phospho-D-ribosyl)imidazole-4-carboxamide + (6S)-5,6,7,8-tetrahydrofolate. The enzyme catalyses IMP + H2O = 5-formamido-1-(5-phospho-D-ribosyl)imidazole-4-carboxamide. Its pathway is purine metabolism; IMP biosynthesis via de novo pathway; 5-formamido-1-(5-phospho-D-ribosyl)imidazole-4-carboxamide from 5-amino-1-(5-phospho-D-ribosyl)imidazole-4-carboxamide (10-formyl THF route): step 1/1. The protein operates within purine metabolism; IMP biosynthesis via de novo pathway; IMP from 5-formamido-1-(5-phospho-D-ribosyl)imidazole-4-carboxamide: step 1/1. The sequence is that of Bifunctional purine biosynthesis protein PurH from Cereibacter sphaeroides (strain ATCC 17025 / ATH 2.4.3) (Rhodobacter sphaeroides).